Consider the following 411-residue polypeptide: G1/S-specific cyclin pas1 (411 aa).

Disordered regions lie at residues 210-253 (LKNQ…PSVL) and 307-326 (SLSK…VGVY). A compositionally biased stretch (low complexity) spans 218–252 (PSSSPQTTQDSSPILTMAPSTPVSVGSTPPSTPSV).

Belongs to the cyclin family.

In terms of biological role, essential for the control of the cell cycle at the G1/S (start) transition. Interacts with the pef1 protein kinase. The pef1/pas1 complex activates the res2/cdc10 complex. The polypeptide is G1/S-specific cyclin pas1 (pas1) (Schizosaccharomyces pombe (strain 972 / ATCC 24843) (Fission yeast)).